Consider the following 580-residue polypeptide: Arginine--tRNA ligase (580 aa).

The short motif at 131–141 is the 'HIGH' region element; that stretch reads ANPTGPMHVGH.

Belongs to the class-I aminoacyl-tRNA synthetase family. In terms of assembly, monomer.

Its subcellular location is the cytoplasm. The enzyme catalyses tRNA(Arg) + L-arginine + ATP = L-arginyl-tRNA(Arg) + AMP + diphosphate. This Cereibacter sphaeroides (strain ATCC 17029 / ATH 2.4.9) (Rhodobacter sphaeroides) protein is Arginine--tRNA ligase.